The chain runs to 186 residues: Elongation factor P (186 aa).

Belongs to the elongation factor P family.

The protein localises to the cytoplasm. The protein operates within protein biosynthesis; polypeptide chain elongation. Functionally, involved in peptide bond synthesis. Stimulates efficient translation and peptide-bond synthesis on native or reconstituted 70S ribosomes in vitro. Probably functions indirectly by altering the affinity of the ribosome for aminoacyl-tRNA, thus increasing their reactivity as acceptors for peptidyl transferase. This is Elongation factor P from Polynucleobacter asymbioticus (strain DSM 18221 / CIP 109841 / QLW-P1DMWA-1) (Polynucleobacter necessarius subsp. asymbioticus).